We begin with the raw amino-acid sequence, 1135 residues long: Glutamate receptor ionotropic, NMDA 3A (1135 aa).

The first 23 residues, 1-23 (MRRLSLWWLLSRVCLLLPPPCAL), serve as a signal peptide directing secretion. Over 24-674 (VLAGVPSSSS…PIGAFMWPLH (651 aa)) the chain is Extracellular. The interval 60 to 117 (TAPRAASRAQEGGRAGAQRDDPESGTWRPPAPSQGARWLGSALHGRGPPGSRKLGEGA) is disordered. N-linked (GlcNAc...) asparagine glycans are attached at residues asparagine 145, asparagine 264, asparagine 275, asparagine 285, asparagine 296, asparagine 300, asparagine 426, asparagine 439, asparagine 549, and asparagine 565. 2 cysteine pairs are disulfide-bonded: cysteine 537/cysteine 575 and cysteine 543/cysteine 576. Glycine-binding residues include serine 631, serine 633, and arginine 638. D-serine is bound by residues serine 633 and arginine 638. The helical transmembrane segment at 675–694 (WTMWLGIFVALHITAIFLTL) threads the bilayer. Over 695–715 (YEWKSPFGMTPKGRNRNKVFS) the chain is Cytoplasmic. The segment at residues 716–727 (FSSALNVCYALL) is an intramembrane region (discontinuously helical). The Cytoplasmic portion of the chain corresponds to 728–741 (FGRTAAIKPPKCWT). Residues 742–761 (GRFLMNLWAIFCMFCLSTYT) traverse the membrane as a helical segment. Over 762-932 (ANLAAVMVGE…TLQMGIKHFS (171 aa)) the chain is Extracellular. A glycine-binding site is contributed by serine 801. 3 residues coordinate D-serine: serine 801, alanine 802, and aspartate 845. Position 845 (aspartate 845) interacts with glycine. The cysteines at positions 859 and 913 are disulfide-linked. The N-linked (GlcNAc...) asparagine glycan is linked to asparagine 886. The helical transmembrane segment at 933–948 (GLFVLLCIGFGLSILT) threads the bilayer. At 949 to 1135 (TIGEHIVHRL…YQKTNRTCES (187 aa)) the chain is on the cytoplasmic side. The segment at 951–987 (GEHIVHRLLLPRIKNKSKLQYWLHTSQRFHRALNTSF) is PPP2CB binding site. The stretch at 1080–1129 (TTNGKADSLNVTRSSVIQELSELEKQIQVIRQELQLAVSRKTELEEYQKT) forms a coiled coil. The segment at 1082-1115 (NGKADSLNVTRSSVIQELSELEKQIQVIRQELQL) is GIT1-binding.

It belongs to the glutamate-gated ion channel (TC 1.A.10.1) family. NR3A/GRIN3A subfamily. As to quaternary structure, heterotetramer. Forms heterotetrameric channels composed of two GluN1/zeta subunits (GRIN1), and two identical GluN3 subunits (GRIN3A or GRIN3B) (in vitro). Can also form heterotetrameric channels that contain at least two GluN1 subunits and at least a combination of one GluN2 and one GluN3 subunits (in vitro). Does not form functional homomeric channels. Found in a complex with GRIN1, GRIN2A or GRIN2B and PPP2CB. Probably interacts with PPP2CB. No complex with PPP2CB is detected when NMDARs are stimulated by NMDA. Interacts (via C-terminus) with GIT1, but not with GRIA1/GluA1, nor with synaptophysin/SYP; this interaction competes with GIT1 interaction with ARHGEF7/beta-PIX. Post-translationally, N-glycosylated. As to expression, isoform 1 and isoform 2 are expressed in olfactory bulb, frontal occipital, entorhinal and pyriform cortices, hippocampus, striatum, thalamus, cerebellum and spinal cord.

It localises to the cell membrane. Its subcellular location is the postsynaptic cell membrane. It is found in the postsynaptic density. The enzyme catalyses Ca(2+)(in) = Ca(2+)(out). It catalyses the reaction Na(+)(in) = Na(+)(out). With respect to regulation, excitatory glycine receptors are inhibited by D-serine at a concentrion of 10uM. Component of a non-conventional N-methyl-D-aspartate (NMDA) receptors (NMDARs) that function as heterotetrameric, ligand-gated cation channels with low calcium permeability and low voltage-dependent block by Mg(2+). During the development of neural circuits, participates in the synaptic refinement period, restricting spine maturation and growth. Forms glutamatergic receptor complexes with GluN1 and GluN2 subunits which are activated by glycine binding to the GluN1 and GluN3 subunits and L-glutamate binding to GluN2 subunits. Forms excitatory glycinergic receptor complexes with GluN1 alone which are activated by glycine binding to the GluN1 and GluN3 subunits. GluN3A subunit also binds D-serine. Each GluN3 subunit confers differential attributes to channel properties, including activation, deactivation and desensitization kinetics, pH sensitivity, Ca2(+) permeability, and binding to allosteric modulators. By competing with GIT1 interaction with ARHGEF7/beta-PIX, may reduce GIT1/ARHGEF7-regulated local activation of RAC1, hence affecting signaling and limiting the maturation and growth of inactive synapses. This chain is Glutamate receptor ionotropic, NMDA 3A, found in Rattus norvegicus (Rat).